Reading from the N-terminus, the 353-residue chain is Probable dual-specificity RNA methyltransferase RlmN (353 aa).

The Proton acceptor role is filled by Glu104. One can recognise a Radical SAM core domain in the interval 112-341 (DGGRKTICIS…ILNRRSPGKD (230 aa)). Cys119 and Cys346 are oxidised to a cystine. 3 residues coordinate [4Fe-4S] cluster: Cys126, Cys130, and Cys133. Residues 173–174 (GE), Ser205, 228–230 (SLN), and Asn304 each bind S-adenosyl-L-methionine. Cys346 (S-methylcysteine intermediate) is an active-site residue.

The protein belongs to the radical SAM superfamily. RlmN family. Requires [4Fe-4S] cluster as cofactor.

It localises to the cytoplasm. It carries out the reaction adenosine(2503) in 23S rRNA + 2 reduced [2Fe-2S]-[ferredoxin] + 2 S-adenosyl-L-methionine = 2-methyladenosine(2503) in 23S rRNA + 5'-deoxyadenosine + L-methionine + 2 oxidized [2Fe-2S]-[ferredoxin] + S-adenosyl-L-homocysteine. The catalysed reaction is adenosine(37) in tRNA + 2 reduced [2Fe-2S]-[ferredoxin] + 2 S-adenosyl-L-methionine = 2-methyladenosine(37) in tRNA + 5'-deoxyadenosine + L-methionine + 2 oxidized [2Fe-2S]-[ferredoxin] + S-adenosyl-L-homocysteine. Functionally, specifically methylates position 2 of adenine 2503 in 23S rRNA and position 2 of adenine 37 in tRNAs. This chain is Probable dual-specificity RNA methyltransferase RlmN, found in Leptospira interrogans serogroup Icterohaemorrhagiae serovar Lai (strain 56601).